We begin with the raw amino-acid sequence, 272 residues long: tRNA uridine(34) hydroxylase (272 aa).

The Rhodanese domain maps to 121–217 (SRSDVYTIDT…YFKSTGNINN (97 aa)). Residue Cys-177 is the Cysteine persulfide intermediate of the active site.

The protein belongs to the TrhO family.

The catalysed reaction is uridine(34) in tRNA + AH2 + O2 = 5-hydroxyuridine(34) in tRNA + A + H2O. Functionally, catalyzes oxygen-dependent 5-hydroxyuridine (ho5U) modification at position 34 in tRNAs. In Ehrlichia ruminantium (strain Welgevonden), this protein is tRNA uridine(34) hydroxylase.